Reading from the N-terminus, the 196-residue chain is DNA replication complex GINS protein PSF1 (196 aa).

It belongs to the GINS1/PSF1 family. In terms of assembly, component of the GINS complex which is a heterotetramer of GINS1, GINS2, GINS3 and GINS4. Forms a stable subcomplex with GINS4. GINS complex interacts with DNA primase in vitro. Component of the CMG helicase complex, a hexameric ring of related MCM2-7 subunits stabilized by CDC45 and the tetrameric GINS complex.

Its subcellular location is the nucleus. The protein localises to the chromosome. Its function is as follows. Required for correct functioning of the GINS complex, a complex that plays an essential role in the initiation of DNA replication, and progression of DNA replication forks. GINS complex is a core component of CDC45-MCM-GINS (CMG) helicase, the molecular machine that unwinds template DNA during replication, and around which the replisome is built. In Bos taurus (Bovine), this protein is DNA replication complex GINS protein PSF1 (GINS1).